Reading from the N-terminus, the 490-residue chain is Glutamate--tRNA ligase (490 aa).

The 'HIGH' region signature appears at 15 to 25; the sequence is PSPTGYLHVGG. The 'KMSKS' region motif lies at 259–263; the sequence is KLSKR. Lysine 262 serves as a coordination point for ATP.

The protein belongs to the class-I aminoacyl-tRNA synthetase family. Glutamate--tRNA ligase type 1 subfamily. As to quaternary structure, monomer.

It is found in the cytoplasm. It carries out the reaction tRNA(Glu) + L-glutamate + ATP = L-glutamyl-tRNA(Glu) + AMP + diphosphate. Catalyzes the attachment of glutamate to tRNA(Glu) in a two-step reaction: glutamate is first activated by ATP to form Glu-AMP and then transferred to the acceptor end of tRNA(Glu). The sequence is that of Glutamate--tRNA ligase from Bdellovibrio bacteriovorus (strain ATCC 15356 / DSM 50701 / NCIMB 9529 / HD100).